The following is a 109-amino-acid chain: uncharacterized protein (109 aa).

2 consecutive transmembrane segments (helical) span residues 19 to 39 (LELVENYVICFFTVLCFCLIP) and 53 to 73 (YFIDFFFFHLSPSIPFWFYPF).

It localises to the membrane. This is an uncharacterized protein from Saccharomyces cerevisiae (strain ATCC 204508 / S288c) (Baker's yeast).